Here is a 354-residue protein sequence, read N- to C-terminus: MEAALAVTRLPPNDPRTPALSVVDMHTGGEPLRIVHAGCPEVAGPTLLAKRRYMRQHLDYIRRRLVFEPRGHRDMYGAILVPSELPDAHLGVLFLHNEGYSSMCGHAVLALGRFALDFGLVPAPPKGAREAQVNIHCPCGLVTAFVECEGGRSCGPVRFHSVPAFVLASDLTVDVPGHGKVLVDIAYGGAFYAFVSAEKLGLDVCSAKTRDLVDAASALTGAVKAQFKINHPESEDLGFLYGSILTDGKDAYSEEATTNICVFADEQVDRSPTGSGVTARIALQYHKGLLQLNQTRAFKSSATGSVFTGCAVREAKCGDFKAVIVEVAGQAHYTGTANLTVEDGDPLRDGFLLK.

Cys-104 (proton acceptor) is an active-site residue. Residues Gly-105–His-106, Asp-269, and Gly-274–Ser-275 each bind substrate.

It belongs to the proline racemase family. As to quaternary structure, homodimer.

The enzyme catalyses trans-3-hydroxy-L-proline = 1-pyrroline-2-carboxylate + H2O. Catalyzes the dehydration of trans-3-hydroxy-L-proline to delta-1-pyrroline-2-carboxylate (Pyr2C). The sequence is that of Trans-L-3-hydroxyproline dehydratase (L3hypdh) from Mus musculus (Mouse).